The chain runs to 128 residues: Large ribosomal subunit protein bL12 (128 aa).

Belongs to the bacterial ribosomal protein bL12 family. As to quaternary structure, homodimer. Part of the ribosomal stalk of the 50S ribosomal subunit. Forms a multimeric L10(L12)X complex, where L10 forms an elongated spine to which 2 to 4 L12 dimers bind in a sequential fashion. Binds GTP-bound translation factors.

Forms part of the ribosomal stalk which helps the ribosome interact with GTP-bound translation factors. Is thus essential for accurate translation. The polypeptide is Large ribosomal subunit protein bL12 (Kineococcus radiotolerans (strain ATCC BAA-149 / DSM 14245 / SRS30216)).